The chain runs to 609 residues: MAGRCGARGALSPQLLLFDLPPALLGELCGILDSCDGPLGWRGLAERLSNSWLDVRHIEKYVNQGKSGTRELLWSWAQKNKTIGDLLEVLQDMGHQRAIHLIINYGVSWTPSVQTHHELPFPSFPPEVKHACRENDPGPLEPANVTVDNVLVPEHNEKGTLQKTPISFQSILEGTKHFHKDFLIGEGEIFEVYRVDIRNQAYAVKLFKQEKKMQLKKHWKRFLSELEVLLLFRHPHILELAAYFTETEKLCLVYPYMSNGTLFDRLQCTNGTTPLSWHVRISVLIGIAKAIQYLHNTQPCAVICGNVSSANILLDDQLQPKLTDFAAAHFRPNLEQQSSTINMTGGGRKHLWYMPEEYIRQGRLSVKTDVYSFGIVIMEVLTGCKVVLDDPKHVQLRDLLMELMEKRGLDSCLSFLDRKIPPCPRNFSAKLFSLAGRCVATKAKLRPTMDEVLSSLESTQPSLYFAEDPPTSLKSFRCPSPLFLDNVPSIPVEDDENQNNHSVPPKEVLGTDRVTQKTPFECSQSEVTFLGLDRNRGNRGSEADCNVPSSSHEECWSPELVAPSQDLSPTVISLGSSWEVPGHSYGSKPMEKRCSSGLFCSEHEQSKKQ.

The Death domain occupies 41 to 106 (WRGLAERLSN…RAIHLIINYG (66 aa)). Thr-110 carries the post-translational modification Phosphothreonine. A Protein kinase domain is found at 178–463 (FHKDFLIGEG…SSLESTQPSL (286 aa)). ATP is bound by residues 184-192 (IGEGEIFEV), Lys-205, 308-311 (SSAN), and Asp-324. Ser-480 bears the Phosphoserine mark.

Belongs to the protein kinase superfamily. TKL Ser/Thr protein kinase family. Pelle subfamily. In terms of assembly, monomer. Homodimer. May interact with IRAK4 (when phosphorylated). Interacts (when phosphorylated at Thr-110) with PIN1 (via WW domain) in response to IL33-mediated (but not TLR4 ligand LPS) dendritic cell stimulation. Expressed in inflamed lung macrophages (at protein level). Expressed in dendritic cells (at protein level). Highly expressed in liver and thymus and at lower levels in heart, brain, spleen and kidney.

It is found in the cytoplasm. The protein resides in the nucleus. In terms of biological role, putative inactive protein kinase which regulates signaling downstream of immune receptors including IL1R and Toll-like receptors. Inhibits dissociation of IRAK1 and IRAK4 from the Toll-like receptor signaling complex by either inhibiting the phosphorylation of IRAK1 and IRAK4 or stabilizing the receptor complex. Upon IL33-induced lung inflammation, positively regulates expression of IL6, CSF3, CXCL2 and CCL5 mRNAs in dendritic cells. The chain is Interleukin-1 receptor-associated kinase 3 from Mus musculus (Mouse).